A 699-amino-acid chain; its full sequence is Long-chain-fatty-acid--CoA ligase 1 (699 aa).

At Met1 the chain carries N-acetylmethionine. A 3'-nitrotyrosine modification is found at Tyr9. A helical; Signal-anchor for type III membrane protein transmembrane segment spans residues 25 to 45 (LPTNTLMGFGAFAALTTFWYA). Residues 46-699 (TRPKALKPPC…IDELYSTIKI (654 aa)) lie on the Cytoplasmic side of the membrane. Tyr85 is subject to Phosphotyrosine. Tyr86 is subject to 3'-nitrotyrosine. O-linked (GlcNAc) serine glycosylation occurs at Ser136. Residues Lys208, Lys357, and Lys387 each carry the N6-acetyllysine modification. At Ser621 the chain carries Phosphoserine. Lys633 bears the N6-acetyllysine mark.

This sequence belongs to the ATP-dependent AMP-binding enzyme family. It depends on Mg(2+) as a cofactor. Liver, heart, epididymal adipose and to a lesser extent brain, small intestine and lung.

The protein localises to the mitochondrion outer membrane. The protein resides in the peroxisome membrane. It localises to the microsome membrane. Its subcellular location is the endoplasmic reticulum membrane. The enzyme catalyses a long-chain fatty acid + ATP + CoA = a long-chain fatty acyl-CoA + AMP + diphosphate. The catalysed reaction is (5Z,8Z,11Z,14Z)-eicosatetraenoate + ATP + CoA = (5Z,8Z,11Z,14Z)-eicosatetraenoyl-CoA + AMP + diphosphate. It carries out the reaction 3,7,11,15-tetramethylhexadecanoate + ATP + CoA = phytanoyl-CoA + AMP + diphosphate. It catalyses the reaction hexadecanoate + ATP + CoA = hexadecanoyl-CoA + AMP + diphosphate. The enzyme catalyses (E)-hexadec-2-enoate + ATP + CoA = (2E)-hexadecenoyl-CoA + AMP + diphosphate. The catalysed reaction is 2,6,10,14-tetramethylpentadecanoate + ATP + CoA = pristanoyl-CoA + AMP + diphosphate. It carries out the reaction 14,15-epoxy-(5Z,8Z,11Z)-eicosatrienoate + ATP + CoA = 14,15-epoxy-(5Z,8Z,11Z)-eicosatrienoyl-CoA + AMP + diphosphate. It catalyses the reaction 5-hydroxy-(6E,8Z,11Z,14Z)-eicosatetraenoate + ATP + CoA = 5-hydroxy-(6E,8Z,11Z,14Z)-eicosatetraenoyl-CoA + AMP + diphosphate. The enzyme catalyses 12-hydroxy-(5Z,8Z,10E,14Z)-eicosatetraenoate + ATP + CoA = 12-hydroxy-(5Z,8Z,10E,14Z)-eicosatetraenoyl-CoA + AMP + diphosphate. The catalysed reaction is 15-hydroxy-(5Z,8Z,11Z,13E)-eicosatetraenoate + ATP + CoA = 15-hydroxy-(5Z,8Z,11Z,13E)-eicosatetraenoyl-CoA + AMP + diphosphate. It carries out the reaction (9Z)-octadecenoate + ATP + CoA = (9Z)-octadecenoyl-CoA + AMP + diphosphate. Inhibited at high temperature and by arachidonate. Its function is as follows. Catalyzes the conversion of long-chain fatty acids to their active form acyl-CoAs for both synthesis of cellular lipids, and degradation via beta-oxidation. Preferentially uses palmitoleate, oleate and linoleate. Preferentially activates arachidonate than epoxyeicosatrienoic acids (EETs) or hydroxyeicosatrienoic acids (HETEs). The protein is Long-chain-fatty-acid--CoA ligase 1 of Rattus norvegicus (Rat).